The sequence spans 181 residues: Insulin-like growth factor 2 (181 aa).

Residues 1-24 (MGIPMRKPLLVLLVFLALASCCYA) form the signal peptide. Residues 25 to 52 (AYRPSETLCGGELVDTLQFVCGDRGFYF) form a b region. 3 disulfides stabilise this stretch: Cys-33–Cys-71, Cys-45–Cys-84, and Cys-70–Cys-75. The c stretch occupies residues 53 to 64 (SRPASRVNRRSR). The a stretch occupies residues 65–85 (GIVEECCFRSCDLALLETYCA). A d region spans residues 86–91 (TPAKSE). Positions 92-181 (RDVSTPPTVL…ASPEASGHRK (90 aa)) are cleaved as a propeptide — e peptide. The disordered stretch occupies residues 151 to 181 (EAKRHRPLTARPTRDPAAHGGASPEASGHRK). Thr-163 carries O-linked (GalNAc...) threonine glycosylation.

Belongs to the insulin family. Interacts with MYORG; this interaction is required for IGF2 secretion. Interacts with integrins ITGAV:ITGB3 and ITGA6:ITGB4; integrin-binding is required for IGF2 signaling. Interacts with IGFBP2. Post-translationally, proteolytically processed by PCSK4, proIGF2 is cleaved at Arg-128 and Arg-92 to generate big-IGF2 and mature IGF2.

It is found in the secreted. The insulin-like growth factors possess growth-promoting activity. Major fetal growth hormone in mammals. Plays a key role in regulating fetoplacental development. IGF2 is influenced by placental lactogen. Also involved in tissue differentiation. In adults, involved in glucose metabolism in adipose tissue, skeletal muscle and liver. Acts as a ligand for integrin which is required for IGF2 signaling. Positively regulates myogenic transcription factor MYOD1 function by facilitating the recruitment of transcriptional coactivators, thereby controlling muscle terminal differentiation. Inhibits myoblast differentiation and modulates metabolism via increasing the mitochondrial respiration rate. In terms of biological role, preptin undergoes glucose-mediated co-secretion with insulin, and acts as a physiological amplifier of glucose-mediated insulin secretion. Exhibits osteogenic properties by increasing osteoblast mitogenic activity through phosphoactivation of MAPK1 and MAPK3. The chain is Insulin-like growth factor 2 from Sus scrofa (Pig).